We begin with the raw amino-acid sequence, 351 residues long: UDP-3-O-acylglucosamine N-acyltransferase (351 aa).

His240 functions as the Proton acceptor in the catalytic mechanism.

The protein belongs to the transferase hexapeptide repeat family. LpxD subfamily. In terms of assembly, homotrimer.

The enzyme catalyses a UDP-3-O-[(3R)-3-hydroxyacyl]-alpha-D-glucosamine + a (3R)-hydroxyacyl-[ACP] = a UDP-2-N,3-O-bis[(3R)-3-hydroxyacyl]-alpha-D-glucosamine + holo-[ACP] + H(+). It participates in bacterial outer membrane biogenesis; LPS lipid A biosynthesis. Catalyzes the N-acylation of UDP-3-O-acylglucosamine using 3-hydroxyacyl-ACP as the acyl donor. Is involved in the biosynthesis of lipid A, a phosphorylated glycolipid that anchors the lipopolysaccharide to the outer membrane of the cell. The protein is UDP-3-O-acylglucosamine N-acyltransferase of Methylacidiphilum infernorum (isolate V4) (Methylokorus infernorum (strain V4)).